Reading from the N-terminus, the 235-residue chain is tRNA (guanine-N(1)-)-methyltransferase (235 aa).

Residues Gly112 and Ile132–Leu137 contribute to the S-adenosyl-L-methionine site.

This sequence belongs to the RNA methyltransferase TrmD family. Homodimer.

The protein localises to the cytoplasm. It carries out the reaction guanosine(37) in tRNA + S-adenosyl-L-methionine = N(1)-methylguanosine(37) in tRNA + S-adenosyl-L-homocysteine + H(+). Specifically methylates guanosine-37 in various tRNAs. This chain is tRNA (guanine-N(1)-)-methyltransferase, found in Cytophaga hutchinsonii (strain ATCC 33406 / DSM 1761 / CIP 103989 / NBRC 15051 / NCIMB 9469 / D465).